The sequence spans 809 residues: MNIQTTVEPTSAERAEKLQGMGCKRKRVEDIRFTQGKGNYVDDVKLPGMLFGDFVRSSHAHARIKSIDTSKAKALPGVFAVLTAADLKPLNLHYMPTLAGDVQAVLADEKVLFQNQEVAFVVAKDRYVAADAIELVEVDYEPLPVLVDPFKAMEPDAPLLREDIKDKMTGAHGARKHHNHIFRWEIGDKEGTDATFAKAEVVSKDMFTYHRVHPSPLETCQCVASMDKIKGELTLWGTFQAPHVIRTVVSLISGLPEHKIHVIAPDIGGGFGNKVGAYSGYVCAVVASIVLGVPVKWVEDRMENLSTTSFARDYHMTTELAATKDGKILAMRCHVLADHGAFDACADPSKWPAGFMNICTGSYDMPVAHLAVDGVYTNKASGGVAYRCSFRVTEAVYAIERAIETLAQRLEMDSADLRIKNFIQPEQFPYMAPLGWEYDSGNYPLAMKKAMDTVGYHQLRAEQKAKQEAFKRGETREIMGIGISFFTEIVGAGPSKNCDILGVSMFDSAEIRIHPTGSVIARMGTKSQGQGHETTYAQIIATELGIPADDIMIEEGNTDTAPYGLGTYGSRSTPTAGAATAVAARKIKAKAQMIAAHMLEVHEGDLEWDVDRFRVKGLPEKFKTMKELAWASYNSPPPNLEPGLEAVNYYDPPNMTYPFGAYFCIMDIDVDTGVAKTRRFYALDDCGTRINPMIIEGQVHGGLTEAFAVAMGQEIRYDEQGNVLGASFMDFFLPTAVETPKWETDYTVTPSPHHPIGAKGVGESPHVGGVPCFSNAVNDAYAFLNAGHIQMPHDAWRLWKVGEQLGLHV.

C388 provides a ligand contact to Cu(+). A Mo-molybdopterin cytosine dinucleotide-binding site is contributed by E763.

In terms of assembly, dimer of heterotrimers. Each heterotrimer consists of a large, a medium and a small subunit. Cu(+) serves as cofactor. Mo-molybdopterin cytosine dinucleotide is required as a cofactor.

It carries out the reaction CO + a quinone + H2O = a quinol + CO2. Catalyzes the oxidation of carbon monoxide to carbon dioxide. The polypeptide is Carbon monoxide dehydrogenase large chain (coxL) (Afipia carboxidovorans (strain ATCC 49405 / DSM 1227 / KCTC 32145 / OM5) (Oligotropha carboxidovorans)).